The sequence spans 596 residues: Zinc finger E-box-binding homeobox protein zag-1 (596 aa).

The C2H2-type 1 zinc-finger motif lies at 24 to 46 (FKCPECTKAFKFKHHLKEHIRIH). A C2H2-type 2; degenerate zinc finger spans residues 52 to 72 (FECQQCHKRFSHSGSYSSHMS). The segment covering 133–145 (LENGTSPTPTQEP) has biased composition (polar residues). Disordered stretches follow at residues 133–225 (LENG…RPLR), 324–369 (NNSL…EPEW), and 395–421 (GFVT…GSSS). A compositionally biased stretch (basic and acidic residues) spans 165–179 (SEVKTEVKTEVKTED). Residues 188–200 (PAVSMSLSPAPEQ) are compositionally biased toward polar residues. Positions 201–216 (NGNESMNNGGSGSDGK) are enriched in low complexity. Positions 223–282 (PLRSRSFLNDSQVAVLQNHFKRNPFPSKYELSAVAEQIGVNKRVVQVWFQNTRAKERRSN) form a DNA-binding region, homeobox. The span at 331–355 (QDERNNENTDEVMDHDGLKDGKETP) shows a compositional bias: basic and acidic residues. C2H2-type zinc fingers lie at residues 481–503 (FSCD…KYEH) and 509–531 (YKCD…KRLH). The segment at 537 to 560 (FQCDKCLKRFSHSGSYSQHMNHRY) adopts a C2H2-type 5; degenerate zinc-finger fold. The disordered stretch occupies residues 569 to 596 (QPASPSDVLNGGSVTVSPSSSNTPPPST). A compositionally biased stretch (low complexity) spans 578 to 590 (NGGSVTVSPSSSN).

As to expression, expressed in the six touch receptor neurons (TRNs) but not in the FLP and PVD neurons. Expressed in the M4 cholinergic motor neuron.

Its subcellular location is the nucleus. Its function is as follows. Transcription factor. Down-regulates expression of genes involved in either the synthesis or reuptake of serotonin, dopamine and GABA. Acts as a transcriptional repressor to regulate multiple, discrete, neuron-specific aspects of terminal differentiation, including cell migration, axonal development and gene expression. Promotes touch receptor neuron differentiation by repressing the expression of egl-44 and egl-46. As egl-44 and egl-46, probably acting as a heterodimer, repress expression of zag-1 in FLP neurons, together these proteins form a bistable, negative-feedback loop that regulates the choice between neuronal fates. Required for axon guidance. Involved in the proper development of the pharynx. Required for pharynx isthmus peristalsis, probably via a role in the differentiation of the M4 cholinergic motor neuron. Directly represses its own transcription by interacting with conserved E-box sequence motifs 5'-CACCTG-3' in its own promoter. May also act as a transcriptional activator of the homeodomain ceh-28. The chain is Zinc finger E-box-binding homeobox protein zag-1 from Caenorhabditis elegans.